A 1184-amino-acid polypeptide reads, in one-letter code: Protocadherin-12 (1184 aa).

A signal peptide spans Met1–Cys24. Residues Gln25–Thr718 are Extracellular-facing. Cadherin domains are found at residues Thr28–Phe135, Pro136–Phe244, Ala245–Ile352, Thr355–Phe460, and Glu461–Val565. A glycan (N-linked (GlcNAc...) asparagine) is linked at Asn415. N-linked (GlcNAc...) asparagine glycans are attached at residues Asn582, Asn659, and Asn662. One can recognise a Cadherin 6 domain in the interval Pro600–Ala711. The helical transmembrane segment at Val719–Ile739 threads the bilayer. The Cytoplasmic portion of the chain corresponds to Cys740 to Leu1184. Disordered stretches follow at residues Arg854–Pro928 and Gln973–Glu1023. Phosphoserine is present on Ser859. The segment covering Pro1012–Glu1023 has biased composition (acidic residues). At Ser1062 the chain carries Phosphoserine. The tract at residues Ser1153–Leu1184 is disordered. Over residues Arg1175–Leu1184 the composition is skewed to low complexity.

Cleaved by ADAM10 close to the transmembrane domain to release the Protocadherin-12, secreted form in the serum. Cleavage results in reduced cellular adhesion in a cell migration assay. In terms of tissue distribution, expressed in highly vascularized tissues including the heart and placenta, but most tissues contain a low level of expression. Prominent expression in the spleen. Present in villous and extravillous trophoblast (at protein level).

It localises to the cell membrane. The protein resides in the cell junction. Its subcellular location is the secreted. Its function is as follows. Cellular adhesion molecule that may play an important role in cell-cell interactions at interendothelial junctions. Acts as a regulator of cell migration, probably via increasing cell-cell adhesion. Promotes homotypic calcium-dependent aggregation and adhesion and clusters at intercellular junctions. Unable to bind to catenins, weakly associates with the cytoskeleton. This chain is Protocadherin-12, found in Homo sapiens (Human).